A 352-amino-acid polypeptide reads, in one-letter code: tRNA pseudouridine synthase D (352 aa).

Asp-81 serves as the catalytic Nucleophile. One can recognise a TRUD domain in the interval 157 to 303; that stretch reads GIPNYFGAQR…MEHERRILRL (147 aa).

The protein belongs to the pseudouridine synthase TruD family.

The enzyme catalyses uridine(13) in tRNA = pseudouridine(13) in tRNA. Its function is as follows. Responsible for synthesis of pseudouridine from uracil-13 in transfer RNAs. This is tRNA pseudouridine synthase D from Pseudomonas syringae pv. syringae (strain B728a).